Here is a 453-residue protein sequence, read N- to C-terminus: Cytochrome b-c1 complex subunit 2, mitochondrial (453 aa).

The N-terminal 14 residues, 1-14 (MKLLTRAGSLSRFY), are a transit peptide targeting the mitochondrion. N6-acetyllysine is present on residues Lys66, Lys199, and Lys250.

Belongs to the peptidase M16 family. UQCRC2/QCR2 subfamily. As to quaternary structure, component of the ubiquinol-cytochrome c oxidoreductase (cytochrome b-c1 complex, complex III, CIII), a multisubunit enzyme composed of 11 subunits. The complex is composed of 3 respiratory subunits cytochrome b, cytochrome c1 and Rieske protein UQCRFS1, 2 core protein subunits UQCRC1/QCR1 and UQCRC2/QCR2, and 6 low-molecular weight protein subunits UQCRH/QCR6, UQCRB/QCR7, UQCRQ/QCR8, UQCR10/QCR9, UQCR11/QCR10 and subunit 9, the cleavage product of Rieske protein UQCRFS1. The complex exists as an obligatory dimer and forms supercomplexes (SCs) in the inner mitochondrial membrane with NADH-ubiquinone oxidoreductase (complex I, CI) and cytochrome c oxidase (complex IV, CIV), resulting in different assemblies (supercomplex SCI(1)III(2)IV(1) and megacomplex MCI(2)III(2)IV(2)). Interacts with RAB5IF. Interacts with STMP1.

It is found in the mitochondrion inner membrane. Component of the ubiquinol-cytochrome c oxidoreductase, a multisubunit transmembrane complex that is part of the mitochondrial electron transport chain which drives oxidative phosphorylation. The respiratory chain contains 3 multisubunit complexes succinate dehydrogenase (complex II, CII), ubiquinol-cytochrome c oxidoreductase (cytochrome b-c1 complex, complex III, CIII) and cytochrome c oxidase (complex IV, CIV), that cooperate to transfer electrons derived from NADH and succinate to molecular oxygen, creating an electrochemical gradient over the inner membrane that drives transmembrane transport and the ATP synthase. The cytochrome b-c1 complex catalyzes electron transfer from ubiquinol to cytochrome c, linking this redox reaction to translocation of protons across the mitochondrial inner membrane, with protons being carried across the membrane as hydrogens on the quinol. In the process called Q cycle, 2 protons are consumed from the matrix, 4 protons are released into the intermembrane space and 2 electrons are passed to cytochrome c. The 2 core subunits UQCRC1/QCR1 and UQCRC2/QCR2 are homologous to the 2 mitochondrial-processing peptidase (MPP) subunits beta-MPP and alpha-MPP respectively, and they seem to have preserved their MPP processing properties. May be involved in the in situ processing of UQCRFS1 into the mature Rieske protein and its mitochondrial targeting sequence (MTS)/subunit 9 when incorporated into complex III. This chain is Cytochrome b-c1 complex subunit 2, mitochondrial (UQCRC2), found in Bos taurus (Bovine).